The chain runs to 275 residues: Octanoyl-[GcvH]:protein N-octanoyltransferase (275 aa).

A BPL/LPL catalytic domain is found at glycine 42–glutamate 246. Residue cysteine 145 is the Acyl-thioester intermediate of the active site.

It belongs to the octanoyltransferase LipL family.

The enzyme catalyses N(6)-octanoyl-L-lysyl-[glycine-cleavage complex H protein] + L-lysyl-[lipoyl-carrier protein] = N(6)-octanoyl-L-lysyl-[lipoyl-carrier protein] + L-lysyl-[glycine-cleavage complex H protein]. Its pathway is protein modification; protein lipoylation via endogenous pathway; protein N(6)-(lipoyl)lysine from octanoyl-[acyl-carrier-protein]. Its function is as follows. Catalyzes the amidotransfer (transamidation) of the octanoyl moiety from octanoyl-GcvH to the lipoyl domain of the E2 subunit of lipoate-dependent enzymes. This is Octanoyl-[GcvH]:protein N-octanoyltransferase from Anoxybacillus flavithermus (strain DSM 21510 / WK1).